A 342-amino-acid polypeptide reads, in one-letter code: Phosphate acyltransferase (342 aa).

Belongs to the PlsX family. Homodimer. Probably interacts with PlsY.

The protein localises to the cytoplasm. The enzyme catalyses a fatty acyl-[ACP] + phosphate = an acyl phosphate + holo-[ACP]. Its pathway is lipid metabolism; phospholipid metabolism. In terms of biological role, catalyzes the reversible formation of acyl-phosphate (acyl-PO(4)) from acyl-[acyl-carrier-protein] (acyl-ACP). This enzyme utilizes acyl-ACP as fatty acyl donor, but not acyl-CoA. This Shewanella sediminis (strain HAW-EB3) protein is Phosphate acyltransferase.